We begin with the raw amino-acid sequence, 495 residues long: COP9 signalosome complex subunit 2 (495 aa).

Residues 1–26 (MGDEYMDDDEDYGFEYEDDSGSEPDV) are disordered. The PCI domain occupies 254 to 416 (AHTDFFEAFK…GMIEMPKNKK (163 aa)). The tract at residues 426–468 (PNAGDQGTTKSDSKPGTSSEPSTTTSVTSSILQGPPATSSCHQ) is disordered. The span at 430–441 (DQGTTKSDSKPG) shows a compositional bias: polar residues. Residues 442-455 (TSSEPSTTTSVTSS) show a composition bias toward low complexity.

This sequence belongs to the CSN2 family. In terms of assembly, component of the CSN complex, probably composed of csn-1, csn-2, csn-3, csn-4, csn-5, csn-6 and csn-7. Within the complex it probably interacts directly with csn-1, csn-3 and csn-4.

The protein localises to the cytoplasm. It localises to the nucleus. Functionally, essential component of the COP9 signalosome complex (CSN), a complex involved in various cellular and developmental processes. The CSN complex is an essential regulator of the ubiquitin (Ubl) conjugation pathway by mediating the deneddylation of the cullin subunits of the SCF-type E3 ligase complexes, leading to decrease the Ubl ligase activity of SCF. The CSN complex plays an essential role in embryogenesis and oogenesis and is required to regulate microtubule stability in the early embryo. Mediates mei-3/katanin targeting for degradation at the meiosis to mitosis transition via deneddylation of cul-3. This Caenorhabditis elegans protein is COP9 signalosome complex subunit 2 (csn-2).